Consider the following 1250-residue polypeptide: Bifunctional autolysin (1250 aa).

Positions 1-29 are cleaved as a signal peptide; sequence MAKKFNYKLPSMVALTLVGSAVTAHQVQA. Residues 103-138 are compositionally biased toward polar residues; the sequence is GDTRANQSATTNNTQPVAKSTSTTAPKTNTNVTNAG. Disordered stretches follow at residues 103–151 and 173–219; these read GDTR…NSEN and AAAP…KYKP. A compositionally biased stretch (low complexity) spans 173–196; it reads AAAPKAATTSAPKAKTEATPKVTT. Residues 199–769 are N-acetylmuramoyl-L-alanine amidase; that stretch reads ASAQPRSVAA…AVAQPKTAVK (571 aa). GW domains follow at residues 437–511, 513–587, 606–680, 682–756, 778–853, 855–930, and 937–1011; these read TVAA…YNTA, SPVN…DTAK, TVSS…YNNA, SPVN…VPAA, TTQT…VQNL, KEVK…APTA, and AAKD…KELI. The endo-beta-N-acetylglucosaminidase stretch occupies residues 770-1250; that stretch reads AYTVTKPQTT…GKYFDIPQYK (481 aa).

The protein in the N-terminal section; belongs to the N-acetylmuramoyl-L-alanine amidase 2 family. This sequence in the C-terminal section; belongs to the glycosyl hydrolase 73 family. As to quaternary structure, oligomer; forms a ring structure at the cell surface which is important for efficient partitioning of daughter cells after cell division. Undergoes proteolytic processing to generate the two extracellular lytic enzymes, probably at the septal region on the cell surface.

It localises to the secreted. It catalyses the reaction Hydrolyzes the link between N-acetylmuramoyl residues and L-amino acid residues in certain cell-wall glycopeptides.. The enzyme catalyses an N(4)-(oligosaccharide-(1-&gt;3)-[oligosaccharide-(1-&gt;6)]-beta-D-Man-(1-&gt;4)-beta-D-GlcNAc-(1-&gt;4)-alpha-D-GlcNAc)-L-asparaginyl-[protein] + H2O = an oligosaccharide-(1-&gt;3)-[oligosaccharide-(1-&gt;6)]-beta-D-Man-(1-&gt;4)-D-GlcNAc + N(4)-(N-acetyl-beta-D-glucosaminyl)-L-asparaginyl-[protein]. In terms of biological role, endohydrolysis of the di-N-acetylchitobiosyl unit in high-mannose glycopeptides and glycoproteins containing the -[(Man)5(GlcNAc)2]-Asn structure. One N-acetyl-D-glucosamine residue remains attached to the protein; the rest of the oligosaccharide is released intact. Cleaves the peptidoglycan connecting the daughter cells at the end of the cell division cycle, resulting in the separation of the two newly divided cells. Acts as an autolysin in penicillin-induced lysis. This chain is Bifunctional autolysin (atl), found in Staphylococcus aureus (strain MSSA476).